A 273-amino-acid chain; its full sequence is Large ribosomal subunit protein uL2 (273 aa).

2 disordered regions span residues 34 to 54 (LEKK…TRHI) and 223 to 273 (VAMN…RRRK).

It belongs to the universal ribosomal protein uL2 family. In terms of assembly, part of the 50S ribosomal subunit. Forms a bridge to the 30S subunit in the 70S ribosome.

In terms of biological role, one of the primary rRNA binding proteins. Required for association of the 30S and 50S subunits to form the 70S ribosome, for tRNA binding and peptide bond formation. It has been suggested to have peptidyltransferase activity; this is somewhat controversial. Makes several contacts with the 16S rRNA in the 70S ribosome. The polypeptide is Large ribosomal subunit protein uL2 (Azotobacter vinelandii (strain DJ / ATCC BAA-1303)).